An 84-amino-acid polypeptide reads, in one-letter code: Putative membrane protein insertion efficiency factor (84 aa).

This sequence belongs to the UPF0161 family.

The protein localises to the cell inner membrane. Could be involved in insertion of integral membrane proteins into the membrane. The polypeptide is Putative membrane protein insertion efficiency factor (Shewanella baltica (strain OS195)).